The primary structure comprises 595 residues: MSQNDTNHESVEEAVFKYVGVGLEKSGEDDAVNKQKSVDWFLKEQDQDQDQDQDPGRDQDQEDNAKHRDANDVSAVAAAAVAAALSVKKRGRPSEQSSTGSSGKGSGSSGQNNKKSKKNKNKLHLAAVDPELASLDDNLVDGNDSEEQSHHQLVHKAIMDTDNIASQHPDFQQYLNTEDDQEPKKEKSEERSYGDLSNIDDHVDDVSVSGSIPSQVRLKKTAEVLPKVLSSESHNDDQQDDVSNLIQEAAAKASHIINPATQSNGKSFDESEEEALEQFIKEYQKIRGLSRRQICERIWSNERRKDDFWTNICRVLPYRTRSSIYKHVRRKYHIFEQRGKWTPEEDAELARWCAEKEGQWSNIGKVLGRMPEDCRDRWRNYVKCGPNRAANKWSVEEEEKLKNVIHQMLDNASTAYEDGEDDEMKDSSTKIEDSGDADMLDVQDSDKKPSISNSKKKPAAKDIINWTVVSEQMGGSRSRIQCRYKWNKLLKKEALNKIKNISDDDKFWLLTKLRDMGFTEDSQVDWEELSTLMPGRRWTGTELKLLYEKVRTTVRQYKRKTINVICKELVGYPEASLPLDDEIRQHHSGDDEDKD.

Composition is skewed to basic and acidic residues over residues 25-46 and 54-71; these read KSGE…KEQD and DPGR…RDAN. Residues 25–208 are disordered; it reads KSGEDDAVNK…IDDHVDDVSV (184 aa). The segment covering 75-84 has biased composition (low complexity); that stretch reads AVAAAAVAAA. The span at 114 to 123 shows a compositional bias: basic residues; it reads KKSKKNKNKL. The segment covering 163–176 has biased composition (polar residues); that stretch reads NIASQHPDFQQYLN. Positions 182 to 205 are enriched in basic and acidic residues; that stretch reads EPKKEKSEERSYGDLSNIDDHVDD. Residues 333-384 enclose the HTH myb-type domain; it reads HIFEQRGKWTPEEDAELARWCAEKEGQWSNIGKVLGRMPEDCRDRWRNYVKC. The H-T-H motif DNA-binding region spans 360–382; the sequence is WSNIGKVLGRMPEDCRDRWRNYV. The region spanning 385-490 is the Myb-like domain; the sequence is GPNRAANKWS…QCRYKWNKLL (106 aa). The segment at 414–456 is disordered; that stretch reads TAYEDGEDDEMKDSSTKIEDSGDADMLDVQDSDKKPSISNSKK. A compositionally biased stretch (acidic residues) spans 434 to 443; the sequence is SGDADMLDVQ.

The protein resides in the nucleus. In terms of biological role, DNA-binding protein that recognizes sites within both the enhancer and the promoter of rRNA transcription, as well as upstream of many genes transcribed by RNA polymerase II. It is essential for cell growth. May stimulate or inhibit transcription. Specifically recognizes the sequence 5'-CCGGGTA-3' or 5'-CGGGTRR-3' (where R is any purine). The polypeptide is DNA-binding protein REB1 (REB1) (Kluyveromyces lactis (strain ATCC 8585 / CBS 2359 / DSM 70799 / NBRC 1267 / NRRL Y-1140 / WM37) (Yeast)).